A 298-amino-acid chain; its full sequence is Glyoxalase domain-containing protein 4 (298 aa).

Positions 5 to 130 (RALHFVFKVG…GGYKFYLQDR (126 aa)) constitute a VOC 1 domain. Lysine 109 is modified (N6-succinyllysine). Serine 131 is subject to Phosphoserine. The 122-residue stretch at 137-258 (PVLKVTLAVS…DGHEICFVGD (122 aa)) folds into the VOC 2 domain. Residue lysine 273 is modified to N6-succinyllysine.

The protein belongs to the glyoxalase I family. In terms of assembly, interacts with NUDT9.

It is found in the mitochondrion. This chain is Glyoxalase domain-containing protein 4 (Glod4), found in Rattus norvegicus (Rat).